Reading from the N-terminus, the 294-residue chain is Probable endonuclease 4 (294 aa).

Residues histidine 78, histidine 118, glutamate 155, aspartate 189, histidine 192, histidine 226, aspartate 239, histidine 241, and glutamate 271 each coordinate Zn(2+).

This sequence belongs to the AP endonuclease 2 family. Zn(2+) is required as a cofactor.

The catalysed reaction is Endonucleolytic cleavage to 5'-phosphooligonucleotide end-products.. In terms of biological role, endonuclease IV plays a role in DNA repair. It cleaves phosphodiester bonds at apurinic or apyrimidinic (AP) sites, generating a 3'-hydroxyl group and a 5'-terminal sugar phosphate. This chain is Probable endonuclease 4, found in Oleidesulfovibrio alaskensis (strain ATCC BAA-1058 / DSM 17464 / G20) (Desulfovibrio alaskensis).